The following is a 432-amino-acid chain: Adenosylhomocysteinase (432 aa).

The substrate site is built by Thr-56, Asp-131, and Glu-156. 157-159 (TTT) is an NAD(+) binding site. Substrate-binding residues include Lys-186 and Asp-190. NAD(+) contacts are provided by residues Asn-191, 222 to 227 (GDVGKG), Glu-243, 299 to 301 (IGH), and Asn-346.

Belongs to the adenosylhomocysteinase family. The cofactor is NAD(+).

The catalysed reaction is S-adenosyl-L-homocysteine + H2O = L-homocysteine + adenosine. It participates in amino-acid biosynthesis; L-homocysteine biosynthesis; L-homocysteine from S-adenosyl-L-homocysteine: step 1/1. In terms of biological role, adenosylhomocysteine is a competitive inhibitor of S-adenosyl-L-methionine-dependent methyl transferase reactions; therefore adenosylhomocysteinase may play a key role in the control of methylations via regulation of the intracellular concentration of adenosylhomocysteine. This Anopheles gambiae (African malaria mosquito) protein is Adenosylhomocysteinase (Ahcy13).